The chain runs to 562 residues: Probable ganciclovir kinase (562 aa).

Residues 1-16 (MDNGVETPQGQKTQPI) are compositionally biased toward polar residues. Residues 1–32 (MDNGVETPQGQKTQPINLPPVRKKLRKHEGLG) form a disordered region. ATP contacts are provided by residues 201-209 (LGVGAYGKV) and Lys218. Asp313 serves as the catalytic Proton acceptor.

Belongs to the protein kinase superfamily. Tyr protein kinase family. HCMV ganciclovir subfamily.

Functionally, phosphorylates the antiviral nucleoside analog ganciclovir. The sequence is that of Probable ganciclovir kinase (U69) from Homo sapiens (Human).